Here is a 256-residue protein sequence, read N- to C-terminus: Probable hydroxyacylglutathione hydrolase SPCC13B11.03c (256 aa).

His63, His65, Asp67, His68, His118, and Asp139 together coordinate Zn(2+). Substrate contacts are provided by residues 148–150 (RFF), 178–180 (HEY), and 250–253 (RTLK). His178 lines the Zn(2+) pocket.

This sequence belongs to the metallo-beta-lactamase superfamily. Glyoxalase II family. Zn(2+) is required as a cofactor.

The protein localises to the cytoplasm. The protein resides in the nucleus. The enzyme catalyses an S-(2-hydroxyacyl)glutathione + H2O = a 2-hydroxy carboxylate + glutathione + H(+). It catalyses the reaction (R)-S-lactoylglutathione + H2O = (R)-lactate + glutathione + H(+). It participates in secondary metabolite metabolism; methylglyoxal degradation; (R)-lactate from methylglyoxal: step 2/2. Thiolesterase that catalyzes the hydrolysis of S-D-lactoylglutathione to form glutathione and D-lactic acid. Involved in the metabolism of methylglyoxal, a toxic compound for yeast proliferation, by converting methylglyoxal to lactate via S-D-lactoylglutathione by sequential enzyme reactions catalyzed by glyoxalase I and glyoxalase II. This chain is Probable hydroxyacylglutathione hydrolase SPCC13B11.03c, found in Schizosaccharomyces pombe (strain 972 / ATCC 24843) (Fission yeast).